The chain runs to 95 residues: UPF0235 protein Adeh_1087 (95 aa).

The protein belongs to the UPF0235 family.

This chain is UPF0235 protein Adeh_1087, found in Anaeromyxobacter dehalogenans (strain 2CP-C).